Here is a 313-residue protein sequence, read N- to C-terminus: Protein FixB (313 aa).

255 to 283 serves as a coordination point for FAD; it reads LYLAVGISGQIQHMVGANASQTIFAINKD.

It belongs to the ETF alpha-subunit/FixB family. In terms of assembly, heterodimer of FixA and FixB.

The protein operates within amine and polyamine metabolism; carnitine metabolism. Functionally, required for anaerobic carnitine reduction. May bring reductant to CaiA. The polypeptide is Protein FixB (Escherichia coli O17:K52:H18 (strain UMN026 / ExPEC)).